Reading from the N-terminus, the 183-residue chain is Shikimate kinase (183 aa).

18 to 23 (GVGKTT) lines the ATP pocket. Residue threonine 22 participates in Mg(2+) binding. Residues aspartate 40, arginine 64, and glycine 86 each coordinate substrate. Residue arginine 125 participates in ATP binding. Position 143 (arginine 143) interacts with substrate.

This sequence belongs to the shikimate kinase family. As to quaternary structure, monomer. Mg(2+) is required as a cofactor.

Its subcellular location is the cytoplasm. It carries out the reaction shikimate + ATP = 3-phosphoshikimate + ADP + H(+). The protein operates within metabolic intermediate biosynthesis; chorismate biosynthesis; chorismate from D-erythrose 4-phosphate and phosphoenolpyruvate: step 5/7. In terms of biological role, catalyzes the specific phosphorylation of the 3-hydroxyl group of shikimic acid using ATP as a cosubstrate. In Oceanobacillus iheyensis (strain DSM 14371 / CIP 107618 / JCM 11309 / KCTC 3954 / HTE831), this protein is Shikimate kinase.